Consider the following 284-residue polypeptide: 4-hydroxybenzoate octaprenyltransferase (284 aa).

Transmembrane regions (helical) follow at residues 33-53 (VIAA…LGVF), 93-113 (IGLF…MNPL), 136-156 (HIPQ…AWAA), 159-179 (GELP…TIAY), 209-229 (LIIG…GQFY), 235-252 (YYWT…QQHL), and 264-284 (AFLN…VAFW).

This sequence belongs to the UbiA prenyltransferase family. Requires Mg(2+) as cofactor.

It localises to the cell inner membrane. The enzyme catalyses all-trans-octaprenyl diphosphate + 4-hydroxybenzoate = 4-hydroxy-3-(all-trans-octaprenyl)benzoate + diphosphate. Its pathway is cofactor biosynthesis; ubiquinone biosynthesis. Its function is as follows. Catalyzes the prenylation of para-hydroxybenzoate (PHB) with an all-trans polyprenyl group. Mediates the second step in the final reaction sequence of ubiquinone-8 (UQ-8) biosynthesis, which is the condensation of the polyisoprenoid side chain with PHB, generating the first membrane-bound Q intermediate 3-octaprenyl-4-hydroxybenzoate. This Vibrio parahaemolyticus serotype O3:K6 (strain RIMD 2210633) protein is 4-hydroxybenzoate octaprenyltransferase.